The following is a 163-amino-acid chain: Putative defense protein 3 (163 aa).

Positions 1–18 (MMFAYIVAVVSALALTSA) are cleaved as a signal peptide. Residues 19–163 (YPTGAPSSTC…SAPVTVLSHK (145 aa)) form the Reelin domain. Cys28 and Cys103 are disulfide-bonded.

It belongs to the insect defense protein family.

The protein resides in the secreted. In terms of biological role, may have antimicrobial activity. The protein is Putative defense protein 3 of Antheraea mylitta (Tasar silkworm).